The primary structure comprises 220 residues: Lipoprotein-releasing system ATP-binding protein LolD (220 aa).

One can recognise an ABC transporter domain in the interval 1–220 (MRAVDIHKSY…YRMKDGQWQS (220 aa)). 37-44 (GASGAGKS) is an ATP binding site.

This sequence belongs to the ABC transporter superfamily. Lipoprotein translocase (TC 3.A.1.125) family. As to quaternary structure, the complex is composed of two ATP-binding proteins (LolD) and two transmembrane proteins (LolC and LolE).

The protein localises to the cell inner membrane. Part of the ABC transporter complex LolCDE involved in the translocation of mature outer membrane-directed lipoproteins, from the inner membrane to the periplasmic chaperone, LolA. Responsible for the formation of the LolA-lipoprotein complex in an ATP-dependent manner. This is Lipoprotein-releasing system ATP-binding protein LolD from Bdellovibrio bacteriovorus (strain ATCC 15356 / DSM 50701 / NCIMB 9529 / HD100).